The chain runs to 387 residues: Ubiquitin-conjugating enzyme E2 25 (387 aa).

Positions 117–164 (APPVRDDIDEGRGSDISDTTSEPIDDDMAGDGEVDDDDEEEEDDEDAD) are disordered. A compositionally biased stretch (basic and acidic residues) spans 120–131 (VRDDIDEGRGSD). Acidic residues predominate over residues 139 to 164 (PIDDDMAGDGEVDDDDEEEEDDEDAD). The 167-residue stretch at 214–380 (TATDRLMKEI…QQIHAKSGWY (167 aa)) folds into the UBC core domain. The Glycyl thioester intermediate role is filled by Cys315.

The protein belongs to the ubiquitin-conjugating enzyme family. In the embryo, expressed in precursor neuron and muscle cells and in other cells such as hypodermal cells. After hatching of L1 larvae and in all subsequent stages, strongest expression in pharyngeal muscle and anal muscle cells. In L4 larvae and adolescent hermaphrodites, also expressed in the vulval muscles. Expression also detected in all four nerve cords and in neurons with weaker levels in all body wall muscles.

It is found in the cytoplasm. The protein resides in the nucleus. The enzyme catalyses S-ubiquitinyl-[E1 ubiquitin-activating enzyme]-L-cysteine + [E2 ubiquitin-conjugating enzyme]-L-cysteine = [E1 ubiquitin-activating enzyme]-L-cysteine + S-ubiquitinyl-[E2 ubiquitin-conjugating enzyme]-L-cysteine.. It participates in protein modification; protein ubiquitination. Its function is as follows. Catalyzes the covalent attachment of ubiquitin to other proteins (Potential). Required for the maintenance of neuromuscular function. The protein is Ubiquitin-conjugating enzyme E2 25 of Caenorhabditis elegans.